The primary structure comprises 295 residues: Aspartate carbamoyltransferase catalytic subunit (295 aa).

Residues R49 and T50 each contribute to the carbamoyl phosphate site. K77 lines the L-aspartate pocket. Residues R99, H127, and Q130 each coordinate carbamoyl phosphate. Residues R161 and R212 each coordinate L-aspartate. Residues G251 and P252 each contribute to the carbamoyl phosphate site.

Belongs to the aspartate/ornithine carbamoyltransferase superfamily. ATCase family. In terms of assembly, heterododecamer (2C3:3R2) of six catalytic PyrB chains organized as two trimers (C3), and six regulatory PyrI chains organized as three dimers (R2).

It catalyses the reaction carbamoyl phosphate + L-aspartate = N-carbamoyl-L-aspartate + phosphate + H(+). Its pathway is pyrimidine metabolism; UMP biosynthesis via de novo pathway; (S)-dihydroorotate from bicarbonate: step 2/3. Its function is as follows. Catalyzes the condensation of carbamoyl phosphate and aspartate to form carbamoyl aspartate and inorganic phosphate, the committed step in the de novo pyrimidine nucleotide biosynthesis pathway. The polypeptide is Aspartate carbamoyltransferase catalytic subunit (Campylobacter jejuni subsp. doylei (strain ATCC BAA-1458 / RM4099 / 269.97)).